We begin with the raw amino-acid sequence, 86 residues long: MKNLIAELLVKLAQKEEESKELVAQVEALEIVVTALLRQMAQTDQQALIQSIESALEDARPGSQVPVQDSEMLQQYVKKLLRHPRN.

The stretch at 1–42 forms a coiled coil; the sequence is MKNLIAELLVKLAQKEEESKELVAQVEALEIVVTALLRQMAQ.

It belongs to the IraP family. Interacts with RssB.

It localises to the cytoplasm. In terms of biological role, inhibits RpoS proteolysis by regulating RssB activity, thereby increasing the stability of the sigma stress factor RpoS especially during phosphate starvation, but also in stationary phase and during nitrogen starvation. Its effect on RpoS stability is due to its interaction with RssB, which probably blocks the interaction of RssB with RpoS, and the consequent delivery of the RssB-RpoS complex to the ClpXP protein degradation pathway. In Enterobacter sp. (strain 638), this protein is Anti-adapter protein IraP.